Here is a 236-residue protein sequence, read N- to C-terminus: C-&gt;U-editing enzyme APOBEC-1 (236 aa).

The CMP/dCMP-type deaminase domain maps to 10–134 (KDYTLRRRIE…RRNRQGLKDL (125 aa)). H61 serves as a coordination point for Zn(2+). The Proton donor role is filled by E63. C93 and C96 together coordinate Zn(2+).

Belongs to the cytidine and deoxycytidylate deaminase family. In terms of assembly, homodimer. Interacts with A1CF; form an mRNA editing complex. Interacts with RBM47; form an mRNA editing complex. Found in a complex with CELF2/CUGBP2 and A1CF. Interacts with HNRPAB. Interacts with SYNCRIP. Requires Zn(2+) as cofactor. As to expression, expressed exclusively in the intestine.

Its subcellular location is the cytoplasm. The protein localises to the nucleus. It carries out the reaction a cytidine in mRNA + H2O + H(+) = a uridine in mRNA + NH4(+). The enzyme catalyses cytidine(6666) in apoB mRNA + H2O + H(+) = uridine(6666) in apoB mRNA + NH4(+). Its function is as follows. Cytidine deaminase catalyzing the cytidine to uridine postranscriptional editing of a variety of mRNAs. Form complexes with cofactors that confer differential editing activity and selectivity. Responsible for the postranscriptional editing of a CAA codon for Gln to a UAA codon for stop in the apolipoprotein B mRNA. Also involved in CGA (Arg) to UGA (Stop) editing in the NF1 mRNA. May also play a role in the epigenetic regulation of gene expression by participating in DNA demethylation. The chain is C-&gt;U-editing enzyme APOBEC-1 from Oryctolagus cuniculus (Rabbit).